The following is a 594-amino-acid chain: Cationic amino acid transporter 1 (594 aa).

An N-acetylalanine modification is found at A2. Residues 2–78 (ASGGGDDGLR…EMKKTLTWWD (77 aa)) lie on the Cytoplasmic side of the membrane. Residues 79 to 99 (LMWFGIGAVIGSGIFVLTGLE) form a helical membrane-spanning segment. The Extracellular segment spans residues 100 to 104 (ARNHS). N-linked (GlcNAc...) asparagine glycosylation is present at N102. A helical transmembrane segment spans residues 105-125 (GPAVVLSYVVSGVSAMLSVFC). The Cytoplasmic segment spans residues 126–149 (YTEFAVEIPVAGGSFAYLRVELGD). A helical membrane pass occupies residues 150-170 (FMAFIAAGNIILEYVVGGAAV). Over 171-201 (ARSWTSYFATLLNHKPEDFRIIVHKLGEDYS) the chain is Extracellular. A helical transmembrane segment spans residues 202 to 222 (HLDPIAVGVCAIICVLAVVGT). Over 223 to 227 (KGSSR) the chain is Cytoplasmic. Residues 228 to 248 (FNYIASIIHMVVILFVIIAGF) form a helical membrane-spanning segment. The Extracellular portion of the chain corresponds to 249 to 266 (TKADVKNYSDFTPYGVRG). N255 carries N-linked (GlcNAc...) asparagine glycosylation. The helical transmembrane segment at 267-287 (VFKSAAVLFFAYIGFDAVSTM) threads the bilayer. The Cytoplasmic portion of the chain corresponds to 288–297 (AEETKNPGRD). The chain crosses the membrane as a helical span at residues 298 to 318 (IPIGLVGSMVVTTVCYCLMAV). Over 319-348 (TLCLMQPYQQIDPDAPFSVAFSAVGWDWAK) the chain is Extracellular. Residues 349–369 (YIVAFGALKGMTTVLLVGAIG) traverse the membrane as a helical segment. Residues 370 to 393 (QARYMTHIARAHMMPPWLAQVNAK) are Cytoplasmic-facing. A helical transmembrane segment spans residues 394 to 414 (TGTPINATVVMLAATALIAFF). The Extracellular portion of the chain corresponds to 415 to 418 (TKLK). Residues 419–439 (ILADLLSVSTLFIFMFVAVAL) traverse the membrane as a helical segment. Over 440–457 (LVRRYYVTGETSTRDRNK) the chain is Cytoplasmic. A helical membrane pass occupies residues 458–478 (FLVFLGLILASSTATAVYWAL). Residues 479 to 483 (EEEGW) are Extracellular-facing. Residues 484–504 (IGYCITVPIWFLSTVAMKFLV) traverse the membrane as a helical segment. At 505 to 511 (PQARAPK) the chain is on the cytoplasmic side. A helical transmembrane segment spans residues 512-532 (IWGVPLVPWLPSASIAINIFL). The Extracellular portion of the chain corresponds to 533 to 543 (LGSIDTKSFVR). A helical transmembrane segment spans residues 544–564 (FAIWTGILLIYYVLFGLHATY). Over 565 to 594 (DTAKATLKEKQALQKAEEGGVVADNSCSAT) the chain is Cytoplasmic.

Belongs to the amino acid-polyamine-organocation (APC) superfamily. Cationic amino acid transporter (CAT) (TC 2.A.3.3) family. As to expression, expressed in roots, stems, flowers, petioles, seeds, siliques, and leaves. Mostly present in major veins.

Its subcellular location is the membrane. Inhibited by the protonophore 2,4-dinitrophenol. In terms of biological role, high-affinity permease involved in the transport of the cationic amino acids (e.g. arginine, lysine, histidine, citrulline, valine, and glutamate). Transport mostly basic amino acids, and, to a lower extent neutral and acidic amino acids. May function as a proton symporter. The protein is Cationic amino acid transporter 1 (CAT1) of Arabidopsis thaliana (Mouse-ear cress).